Consider the following 536-residue polypeptide: CBS domain-containing protein CBSCBSPB2 (536 aa).

Over residues 1–23 (MTTTPTSSGRRSISSIRRTSSAS) the composition is skewed to low complexity. Residues 1-60 (MTTTPTSSGRRSISSIRRTSSASKKPVLQSEESESGSGSINENTSKPDSPLAQPVSDGER) are disordered. CBS domains follow at residues 66-124 (RLSK…LRPE), 132-187 (MTRN…RMEK), 228-287 (VTEN…LSPE), and 295-354 (MTPN…NNSS). In terms of domain architecture, PB1 spans 406-489 (VSSFAFKFED…KVLRLHLDFT (84 aa)). The chain crosses the membrane as a helical span at residues 509 to 529 (VWWQTGVLAGAIVLTSIGLFV).

Its subcellular location is the membrane. This chain is CBS domain-containing protein CBSCBSPB2 (CBSCBSPB2), found in Arabidopsis thaliana (Mouse-ear cress).